Reading from the N-terminus, the 474-residue chain is 3-isopropylmalate dehydratase large subunit (474 aa).

Positions 352, 413, and 416 each coordinate [4Fe-4S] cluster.

The protein belongs to the aconitase/IPM isomerase family. LeuC type 1 subfamily. As to quaternary structure, heterodimer of LeuC and LeuD. The cofactor is [4Fe-4S] cluster.

It carries out the reaction (2R,3S)-3-isopropylmalate = (2S)-2-isopropylmalate. It functions in the pathway amino-acid biosynthesis; L-leucine biosynthesis; L-leucine from 3-methyl-2-oxobutanoate: step 2/4. Catalyzes the isomerization between 2-isopropylmalate and 3-isopropylmalate, via the formation of 2-isopropylmaleate. The chain is 3-isopropylmalate dehydratase large subunit from Pseudomonas syringae pv. syringae (strain B728a).